We begin with the raw amino-acid sequence, 376 residues long: N-acetyldiaminopimelate deacetylase (376 aa).

Residue Asp69 is part of the active site. The active-site Proton acceptor is Glu128.

The protein belongs to the peptidase M20A family. N-acetyldiaminopimelate deacetylase subfamily.

It carries out the reaction N-acetyl-(2S,6S)-2,6-diaminopimelate + H2O = (2S,6S)-2,6-diaminopimelate + acetate. Its pathway is amino-acid biosynthesis; L-lysine biosynthesis via DAP pathway; LL-2,6-diaminopimelate from (S)-tetrahydrodipicolinate (acetylase route): step 3/3. Functionally, catalyzes the conversion of N-acetyl-diaminopimelate to diaminopimelate and acetate. The chain is N-acetyldiaminopimelate deacetylase from Bacillus cereus (strain 03BB102).